The following is an 876-amino-acid chain: Xylosyltransferase oxt (876 aa).

Residues 1–14 lie on the Cytoplasmic side of the membrane; sequence MEQSVSARWLKRYR. The helical; Signal-anchor for type II membrane protein transmembrane segment at 15-35 threads the bilayer; that stretch reads AFFLILLLIVAIQLFLAYKSL. Over 36-876 the chain is Lumenal; it reads DIVGGGSGSG…PKSDVDALLK (841 aa). Residues 48–67 are disordered; the sequence is AAEAPASPPPPHAQARVQPP. Disulfide bonds link cysteine 83–cysteine 111, cysteine 127–cysteine 465, cysteine 484–cysteine 497, and cysteine 486–cysteine 495. N-linked (GlcNAc...) asparagine glycans are attached at residues asparagine 131 and asparagine 135. The WSC domain maps to 134–228; sequence ANVSLGCFKD…FYAMNIYETG (95 aa). UDP-alpha-D-xylose is bound by residues aspartate 283 and 312–314; that span reads TIW. Residue asparagine 342 is glycosylated (N-linked (GlcNAc...) asparagine). 415–416 serves as a coordination point for UDP-alpha-D-xylose; sequence DW. UDP-alpha-D-xylose is bound by residues serine 498 and 522–523; that span reads RK. 2 N-linked (GlcNAc...) asparagine glycosylation sites follow: asparagine 696 and asparagine 725. Cysteine 842 and cysteine 855 are disulfide-bonded.

The protein belongs to the glycosyltransferase 14 family. XylT subfamily. Ca(2+) serves as cofactor. It depends on Mn(2+) as a cofactor. Mg(2+) is required as a cofactor.

Its subcellular location is the endoplasmic reticulum membrane. The protein resides in the golgi apparatus membrane. The enzyme catalyses UDP-alpha-D-xylose + L-seryl-[protein] = 3-O-(beta-D-xylosyl)-L-seryl-[protein] + UDP + H(+). It functions in the pathway glycan metabolism; chondroitin sulfate biosynthesis. The protein operates within glycan metabolism; heparan sulfate biosynthesis. In terms of biological role, catalyzes the first step in biosynthesis of glycosaminoglycan. Transfers D-xylose from UDP-D-xylose to specific serine residues of the core protein. The protein is Xylosyltransferase oxt of Drosophila melanogaster (Fruit fly).